We begin with the raw amino-acid sequence, 564 residues long: Serine/threonine-protein kinase DBF20 (564 aa).

Phosphoserine is present on S17. The interval 24-62 is disordered; it reads LNIPKPTSPQAQYRPARKSENGRLTPGLPRSYKPCDSDD. One can recognise a Protein kinase domain in the interval 169-469; that stretch reads FQILTQVGQG…FEQVRKMSYF (301 aa). Residues 175 to 183 and K198 contribute to the ATP site; that span reads VGQGGYGQV. The active-site Proton acceptor is the D292. S366 is subject to Phosphoserine. One can recognise an AGC-kinase C-terminal domain in the interval 470–547; the sequence is AEINFETLRT…RHRDGKQGSS (78 aa). T536 carries the post-translational modification Phosphothreonine.

This sequence belongs to the protein kinase superfamily. Ser/Thr protein kinase family.

The catalysed reaction is L-seryl-[protein] + ATP = O-phospho-L-seryl-[protein] + ADP + H(+). It catalyses the reaction L-threonyl-[protein] + ATP = O-phospho-L-threonyl-[protein] + ADP + H(+). Functionally, is probably a Ser/Thr-protein kinase that may function in initiation of DNA synthesis and also in late nuclear division. The chain is Serine/threonine-protein kinase DBF20 (DBF20) from Saccharomyces cerevisiae (strain ATCC 204508 / S288c) (Baker's yeast).